We begin with the raw amino-acid sequence, 1316 residues long: DNA-directed RNA polymerase subunit beta' (1316 aa).

C60, C62, C75, and C78 together coordinate Zn(2+). Positions 535, 537, and 539 each coordinate Mg(2+). The Zn(2+) site is built by C891, C968, C975, and C978.

This sequence belongs to the RNA polymerase beta' chain family. As to quaternary structure, the RNAP catalytic core consists of 2 alpha, 1 beta, 1 beta' and 1 omega subunit. When a sigma factor is associated with the core the holoenzyme is formed, which can initiate transcription. The cofactor is Mg(2+). Requires Zn(2+) as cofactor.

The enzyme catalyses RNA(n) + a ribonucleoside 5'-triphosphate = RNA(n+1) + diphosphate. In terms of biological role, DNA-dependent RNA polymerase catalyzes the transcription of DNA into RNA using the four ribonucleoside triphosphates as substrates. This Mycolicibacterium paratuberculosis (strain ATCC BAA-968 / K-10) (Mycobacterium paratuberculosis) protein is DNA-directed RNA polymerase subunit beta'.